A 225-amino-acid chain; its full sequence is UPF0173 metal-dependent hydrolase PH1671 (225 aa).

Belongs to the UPF0173 family.

This chain is UPF0173 metal-dependent hydrolase PH1671, found in Pyrococcus horikoshii (strain ATCC 700860 / DSM 12428 / JCM 9974 / NBRC 100139 / OT-3).